A 564-amino-acid polypeptide reads, in one-letter code: Kelch-like protein 12 (564 aa).

The BTB domain maps to 29-96; that stretch reads CDITLRVEGT…VYTETVLVTV (68 aa). The 102-residue stretch at 131 to 232 folds into the BACK domain; that stretch reads CLGIRDFAET…LTPRYITDVI (102 aa). Kelch repeat units lie at residues 278–325, 327–375, 376–422, 423–469, 471–516, and 518–563; these read VLLV…ALND, VYVI…TLGD, MIYV…VASG, LIYC…LLND, IYVV…VLRG, and LYAI…VLRE.

In terms of assembly, component of the BCR(KLHL12) E3 ubiquitin ligase complex.

The protein localises to the cytoplasmic vesicle. The protein resides in the COPII-coated vesicle. It participates in protein modification; protein ubiquitination. Its function is as follows. Substrate-specific adapter of a BCR (BTB-CUL3-RBX1) E3 ubiquitin ligase complex that acts as a negative regulator of Wnt signaling pathway and ER-Golgi transport. The BCR(KLHL12) complex is involved in ER-Golgi transport by regulating the size of COPII coats, thereby playing a key role in collagen export, which is required for embryonic stem (ES) cells division. Negatively regulates the Wnt signaling pathway, possibly via the targeted ubiquitination and subsequent proteolysis of dvl2 and dvl3. Regulates convergent-extension movements during early embryonic development. The polypeptide is Kelch-like protein 12 (klhl12) (Danio rerio (Zebrafish)).